Here is a 389-residue protein sequence, read N- to C-terminus: Flap endonuclease 1 (389 aa).

Positions 1 to 105 are N-domain; the sequence is MGIKGLNKLL…GELAKRKERR (105 aa). Aspartate 34 contacts Mg(2+). Residues arginine 47 and arginine 71 each contribute to the DNA site. Mg(2+) is bound by residues aspartate 87, glutamate 170, glutamate 172, aspartate 191, and aspartate 193. Residues 134-265 are I-domain; sequence DVTRFEKRTV…QTALKLMKEH (132 aa). Glutamate 170 provides a ligand contact to DNA. 2 residues coordinate DNA: glycine 243 and aspartate 245. Residue aspartate 245 participates in Mg(2+) binding. Residues 351-359 form an interaction with PCNA region; sequence PQARLDGFF. Positions 360-389 are disordered; that stretch reads KVMPKEGGEKRKADDKKTKGKKPATKKAKK. The span at 362-376 shows a compositional bias: basic and acidic residues; that stretch reads MPKEGGEKRKADDKK. Over residues 377–389 the composition is skewed to basic residues; the sequence is TKGKKPATKKAKK.

This sequence belongs to the XPG/RAD2 endonuclease family. FEN1 subfamily. In terms of assembly, interacts with PCNA. Three molecules of FEN1 bind to one PCNA trimer with each molecule binding to one PCNA monomer. PCNA stimulates the nuclease activity without altering cleavage specificity. Mg(2+) serves as cofactor. In terms of processing, phosphorylated. Phosphorylation upon DNA damage induces relocalization to the nuclear plasma.

The protein localises to the nucleus. It is found in the nucleolus. The protein resides in the nucleoplasm. Its subcellular location is the mitochondrion. Functionally, structure-specific nuclease with 5'-flap endonuclease and 5'-3' exonuclease activities involved in DNA replication and repair. During DNA replication, cleaves the 5'-overhanging flap structure that is generated by displacement synthesis when DNA polymerase encounters the 5'-end of a downstream Okazaki fragment. It enters the flap from the 5'-end and then tracks to cleave the flap base, leaving a nick for ligation. Also involved in the long patch base excision repair (LP-BER) pathway, by cleaving within the apurinic/apyrimidinic (AP) site-terminated flap. Acts as a genome stabilization factor that prevents flaps from equilibrating into structures that lead to duplications and deletions. Also possesses 5'-3' exonuclease activity on nicked or gapped double-stranded DNA, and exhibits RNase H activity. Also involved in replication and repair of rDNA and in repairing mitochondrial DNA. The chain is Flap endonuclease 1 from Yarrowia lipolytica (strain CLIB 122 / E 150) (Yeast).